The following is a 295-amino-acid chain: HTH-type transcriptional regulator TrpI (295 aa).

Residues 6–63 (PSLNALRAFEAAARLHSISLAAEELHVTHGAVSRQVRLLEDDLGVALFGKDGRGVKLT) enclose the HTH lysR-type domain. A DNA-binding region (H-T-H motif) is located at residues 23 to 42 (ISLAAEELHVTHGAVSRQVR).

This sequence belongs to the LysR transcriptional regulatory family. Homotetramer.

Its function is as follows. Activates the expression of the trpBA genes, which encode the two tryptophan synthase subunits, and represses initiation at its own promoter. Acts by binding to two adjacent sites in the intergenic region. In the absence of the inducer indoleglycerol phosphate (InGP), TrpI binds to site I. In the presence of InGP, TrpI binds to site I and site II. Binding to site II is site I dependent. InGP strongly stimulates binding to site II and is required for maximal activation of trpBA. This Pseudomonas aeruginosa (strain ATCC 15692 / DSM 22644 / CIP 104116 / JCM 14847 / LMG 12228 / 1C / PRS 101 / PAO1) protein is HTH-type transcriptional regulator TrpI.